A 461-amino-acid chain; its full sequence is Glycine--tRNA ligase (461 aa).

2 residues coordinate substrate: R99 and E173. ATP-binding positions include 205-207 (RNE), 215-220 (FRTREF), 289-290 (EL), and 333-336 (GADR). 220-224 (FEQME) contributes to the substrate binding site. 329 to 333 (EPSLG) is a substrate binding site.

It belongs to the class-II aminoacyl-tRNA synthetase family. In terms of assembly, homodimer.

It is found in the cytoplasm. It carries out the reaction tRNA(Gly) + glycine + ATP = glycyl-tRNA(Gly) + AMP + diphosphate. Functionally, catalyzes the attachment of glycine to tRNA(Gly). The sequence is that of Glycine--tRNA ligase from Lysinibacillus sphaericus (strain C3-41).